The primary structure comprises 331 residues: Flavonol synthase 1 (331 aa).

The Fe2OG dioxygenase domain occupies 191–292 (DAIELLLKIN…RMSWPVFCSP (102 aa)). His-217, Asp-219, and His-273 together coordinate Fe cation. A 2-oxoglutarate-binding site is contributed by Arg-283.

The protein belongs to the iron/ascorbate-dependent oxidoreductase family. Requires L-ascorbate as cofactor. The cofactor is Fe(2+). In terms of tissue distribution, expressed in young cromes.

The enzyme catalyses a (2R,3R)-dihydroflavonol + 2-oxoglutarate + O2 = a flavonol + succinate + CO2 + H2O. It carries out the reaction (2R,3R)-dihydrokaempferol + 2-oxoglutarate + O2 = kaempferol + succinate + CO2 + H2O + H(+). The catalysed reaction is (2R,3R)-dihydroquercetin + 2-oxoglutarate + O2 = quercetin + succinate + CO2 + H2O + H(+). It catalyses the reaction (2R,3R)-dihydromyricetin + 2-oxoglutarate + O2 = myricetin + succinate + CO2 + H2O + H(+). The protein operates within flavonoid metabolism. Catalyzes the formation of flavonols from dihydroflavonols. Can act on dihydrokaempferol to produce kaempferol, on dihydroquercetin to produce quercitin and on dihydromyricetin to produce myricetin. The chain is Flavonol synthase 1 from Crocosmia x crocosmiiflora (Montbretia).